The following is a 352-amino-acid chain: Lipase chaperone (352 aa).

The chain crosses the membrane as a helical span at residues 7 to 28 (LSLVAVVVAGGLTLYWRWPAAV).

The protein belongs to the lipase chaperone family.

The protein resides in the cell inner membrane. Its function is as follows. May be involved in the folding of the extracellular lipase during its passage through the periplasm. The protein is Lipase chaperone (lifO) of Pseudomonas wisconsinensis.